The sequence spans 571 residues: Podocalyxin (571 aa).

Positions 1–22 are cleaved as a signal peptide; it reads MRPAPPPPLLLLLLLLPPPSLS. At 23 to 474 the chain is on the extracellular side; sequence HDGTIIAATS…EETEDRFSMP (452 aa). A disordered region spans residues 94 to 361; sequence NTVIAPDQDE…QGDDRIKCES (268 aa). Residues 106–116 are compositionally biased toward polar residues; it reads STNPTIATSDS. Residue Asn123 is glycosylated (N-linked (GlcNAc...) asparagine). Polar residues-rich tracts occupy residues 126 to 144, 151 to 169, 176 to 203, and 218 to 245; these read ILPS…TQTA, NPGT…QTTS, KPSS…STTL, and TASS…SSVT. The N-linked (GlcNAc...) asparagine glycan is linked to Asn199. The segment covering 282–300 has biased composition (low complexity); it reads TTSLPSETESLESPSSESP. Over residues 301–311 the composition is skewed to pro residues; the sequence is SQPPKLRPTGP. Low complexity predominate over residues 312-322; it reads PSSGSSGPAAS. Asn373 and Asn383 each carry an N-linked (GlcNAc...) asparagine glycan. The helical transmembrane segment at 475 to 495 threads the bilayer; it reads LIITIVCMASFLLLVAALYGC. At 496 to 571 the chain is on the cytoplasmic side; it reads CHQRLSQRKD…DLDEEEDTHL (76 aa). Thr531 is modified (phosphothreonine). Ser550 bears the Phosphoserine mark. A Phosphothreonine modification is found at Thr569.

It belongs to the podocalyxin family. Found in a complex with EZR, PODXL and NHERF2. Associates with the actin cytoskeleton through complex formation with EZR and NHERF2. Interacts (via the C-terminal PDZ-binding motif DTHL) with NHERF1 (via the PDZ domains); interaction is not detected in glomerular epithelium cells. Interacts (via the C-terminal PDZ-binding motif DTHL) with NHERF2 (via the PDZ 1 domain); interaction is detected in glomerular epithelium cells. Interacts with EZR. Monomer; when associated with the membrane raft. Oligomer; when integrated in the apical membrane. Interacts with NHERF2. Interacts (via the C-terminal PDZ-binding motif DTHL) with NHERF1 (via the PDZ domains); the interaction take place early in the secretory pathway and is necessary for its apical membrane sorting. In terms of processing, N- and O-linked glycosylated. Sialoglycoprotein. Expressed in glomerular and tubular epithelial cells and peritubular capillaries of the kidney (at protein level). Expressed in heart, lung, renal cortex and medulla, kidney and muscle.

It localises to the apical cell membrane. It is found in the membrane raft. The protein localises to the cell projection. Its subcellular location is the lamellipodium. The protein resides in the filopodium. It localises to the ruffle. It is found in the microvillus. The protein localises to the membrane. Functionally, involved in the regulation of both adhesion and cell morphology and cancer progression. Functions as an anti-adhesive molecule that maintains an open filtration pathway between neighboring foot processes in the podocyte by charge repulsion. Acts as a pro-adhesive molecule, enhancing the adherence of cells to immobilized ligands, increasing the rate of migration and cell-cell contacts in an integrin-dependent manner. Induces the formation of apical actin-dependent microvilli. Involved in the formation of a preapical plasma membrane subdomain to set up initial epithelial polarization and the apical lumen formation during renal tubulogenesis. Plays a role in cancer development and aggressiveness by inducing cell migration and invasion through its interaction with the actin-binding protein EZR. Affects EZR-dependent signaling events, leading to increased activities of the MAPK and PI3K pathways in cancer cells. This is Podocalyxin (PODXL) from Canis lupus familiaris (Dog).